The following is a 588-amino-acid chain: Protein disulfide-isomerase-like protein of the testis (588 aa).

An N-terminal signal peptide occupies residues 1-20 (MELLWTPLLLVAACLSEVLG). N-linked (GlcNAc...) asparagine glycans are attached at residues Asn-55, Asn-157, and Asn-337. The 64-residue stretch at 385–448 (PVKKLVGKNF…IAKIDITAND (64 aa)) folds into the Thioredoxin domain. Basic and acidic residues-rich tracts occupy residues 531–542 (IEDTSKQDRPVK), 549–567 (SIRKPEEPERRKETAEREA), and 574–588 (EQPKPERKLEVKEEL). The segment at 531–588 (IEDTSKQDRPVKESPVLDSIRKPEEPERRKETAEREAAAAQPKEQPKPERKLEVKEEL) is disordered. The Prevents secretion from ER motif lies at 585–588 (KEEL).

Belongs to the protein disulfide isomerase family. Homodimer. The homodimer is not disulfide-linked. Interacts with CLGN and ERO1A. N-glycosylated. In terms of tissue distribution, testis-specific (at protein level).

It is found in the endoplasmic reticulum. Its function is as follows. Probable redox-inactive chaperone involved in spermatogenesis. The polypeptide is Protein disulfide-isomerase-like protein of the testis (Pdilt) (Mus musculus (Mouse)).